The sequence spans 623 residues: tRNA uridine 5-carboxymethylaminomethyl modification enzyme MnmG (623 aa).

10 to 15 (GGGHAG) provides a ligand contact to FAD. 269 to 283 (GPRYCPSIEDKIVRF) contributes to the NAD(+) binding site.

This sequence belongs to the MnmG family. In terms of assembly, homodimer. Heterotetramer of two MnmE and two MnmG subunits. FAD serves as cofactor.

Its subcellular location is the cytoplasm. NAD-binding protein involved in the addition of a carboxymethylaminomethyl (cmnm) group at the wobble position (U34) of certain tRNAs, forming tRNA-cmnm(5)s(2)U34. In Rhizobium meliloti (strain 1021) (Ensifer meliloti), this protein is tRNA uridine 5-carboxymethylaminomethyl modification enzyme MnmG.